The chain runs to 193 residues: Phosphoheptose isomerase (193 aa).

In terms of domain architecture, SIS spans 37–193 (LADSFKAGGK…QLIEKEMVKA (157 aa)). A substrate-binding site is contributed by 52-54 (NGG). Residues His61 and Glu65 each coordinate Zn(2+). Substrate is bound by residues Glu65, 93 to 94 (ND), 119 to 121 (STS), Ser124, and Gln172. Gln172 and His180 together coordinate Zn(2+).

The protein belongs to the SIS family. GmhA subfamily. As to quaternary structure, homotetramer. The cofactor is Zn(2+).

The protein localises to the cytoplasm. The enzyme catalyses 2 D-sedoheptulose 7-phosphate = D-glycero-alpha-D-manno-heptose 7-phosphate + D-glycero-beta-D-manno-heptose 7-phosphate. The protein operates within carbohydrate biosynthesis; D-glycero-D-manno-heptose 7-phosphate biosynthesis; D-glycero-alpha-D-manno-heptose 7-phosphate and D-glycero-beta-D-manno-heptose 7-phosphate from sedoheptulose 7-phosphate: step 1/1. Its pathway is bacterial outer membrane biogenesis; LPS core biosynthesis. In terms of biological role, catalyzes the isomerization of sedoheptulose 7-phosphate in D-glycero-D-manno-heptose 7-phosphate. The sequence is that of Phosphoheptose isomerase from Yersinia pestis.